The primary structure comprises 344 residues: Arginine N-succinyltransferase (344 aa).

Leu125 is a binding site for succinyl-CoA. The active-site Proton donor is the His229.

This sequence belongs to the arginine N-succinyltransferase family.

It catalyses the reaction succinyl-CoA + L-arginine = N(2)-succinyl-L-arginine + CoA + H(+). It functions in the pathway amino-acid degradation; L-arginine degradation via AST pathway; L-glutamate and succinate from L-arginine: step 1/5. Functionally, catalyzes the transfer of succinyl-CoA to arginine to produce N(2)-succinylarginine. This is Arginine N-succinyltransferase from Escherichia coli O127:H6 (strain E2348/69 / EPEC).